Here is a 680-residue protein sequence, read N- to C-terminus: Putative E3 ubiquitin-protein ligase UNKL (680 aa).

The segment at 1-22 is disordered; the sequence is MPSVSKAAAAALSGSPPQTEKP. 4 C3H1-type zinc fingers span residues 75 to 104, 115 to 145, 243 to 277, and 283 to 310; these read YSPDVYCSKYNEATGVCPDGDECPYLHRTT, YYKTGTCIHETDARGHCVKNGLHCAFAHGPL, QYRSTPCPSVKHGDEWGEPSRCDGGDGCQYCHSRT, and PESTKCNDMRQTGYCPRGPFCAFAHVEK. Composition is skewed to low complexity over residues 326-337, 375-396, 465-497, and 545-562; these read TSPSSTGSGQPG, VSSSVASSLASSAGSGSSSPTA, SLPRAPSLHSPSSASTSPLGSLSQPLPGPVGSS, and SPSPILSAGPPSSSSASP. Disordered regions lie at residues 326 to 358, 375 to 400, 442 to 520, and 545 to 566; these read TSPSSTGSGQPGNAKRRDSPAEGGPRGSEQDSK, VSSSVASSLASSAGSGSSSPTALPAP, DGHD…SAAS, and SPSPILSAGPPSSSSASPNGAE. Positions 563 to 619 form a coiled coil; the sequence is NGAELARVRRQLDEAKRKIRQWEESWQQVKQVCDAWQREAQEAKERARVADSDRQLA. The RING-type zinc finger occupies 639 to 674; sequence CVACRERAHGAVLRPCQHHILCEPCAATAPECPYCK.

The protein belongs to the unkempt family. In terms of assembly, isoform 4 (C-terminal) interacts with the GTP-bound form of RAC1. Isoform 4 (C-terminal) interacts with SMARCD2/BAF60b. Post-translationally, isoform 4 is ubiquitinated in the C-terminal. Ubiquitination is enhanced by activated RAC1. The presence of the RING finger domain is not essential for ubiquitination to occur.

The protein resides in the cytoplasm. It localises to the nucleus. The protein operates within protein modification; protein ubiquitination. Its function is as follows. May participate in a protein complex showing an E3 ligase activity regulated by RAC1. Ubiquitination is directed towards itself and possibly other substrates, such as SMARCD2/BAF60b. Intrinsic E3 ligase activity has not been proven. The sequence is that of Putative E3 ubiquitin-protein ligase UNKL (UNKL) from Homo sapiens (Human).